The chain runs to 299 residues: Nitrogenase iron protein (299 aa).

Residue glycine 11–serine 18 participates in ATP binding. Position 99 (cysteine 99) interacts with [4Fe-4S] cluster. Arginine 102 is subject to ADP-ribosylarginine; by dinitrogenase reductase ADP-ribosyltransferase. Cysteine 133 lines the [4Fe-4S] cluster pocket.

This sequence belongs to the NifH/BchL/ChlL family. Homodimer. [4Fe-4S] cluster serves as cofactor. The reversible ADP-ribosylation of Arg-102 inactivates the nitrogenase reductase and regulates nitrogenase activity.

The enzyme catalyses N2 + 8 reduced [2Fe-2S]-[ferredoxin] + 16 ATP + 16 H2O = H2 + 8 oxidized [2Fe-2S]-[ferredoxin] + 2 NH4(+) + 16 ADP + 16 phosphate + 6 H(+). Its function is as follows. The key enzymatic reactions in nitrogen fixation are catalyzed by the nitrogenase complex, which has 2 components: the iron protein and the molybdenum-iron protein. This chain is Nitrogenase iron protein, found in Rhodopseudomonas palustris (strain BisB5).